A 396-amino-acid chain; its full sequence is MDKLLRRVRMAEGMVARRAQRKNALLKRITERKQNKKNGEAFTEAIQQRKAAVEARNEDWMLGPLAPRRELDEITLSNGNFFGSLSPTRALLESEVSEEERKARVAWCGSPKFLCIAPGDRVVVIEGHHKDLIGTIEKLNTRNMTVEIQSEKLKTNTTVPQFMQNDADKPVTQIYARLPISSVRLVHPLKDPQTGEYRDVIIRELRPRNIVHDRPTRTRSMRRFVPGENIIIPWPKQEPIKREDQPADTLRIDVDEKTFVPTLFRPPAPQQVLDELRNKYSIFRTRHTPEYIAKKEQEEQEKEAKKSAAKAMLTPVQEYNRKQRELRRARGQPALTEEMLAKIGEVVARNKLGHHQAPKVKEETVAQIEKAVEQLSLGGGQEDAATTTSPEQPKVV.

Positions 374–396 (QLSLGGGQEDAATTTSPEQPKVV) are disordered. Polar residues predominate over residues 384–396 (AATTTSPEQPKVV).

This sequence belongs to the universal ribosomal protein uL24 family. Component of the mitochondrial large ribosomal subunit (mt-LSU). Mature N.crassa 74S mitochondrial ribosomes consist of a small (37S) and a large (54S) subunit. The 37S small subunit contains a 16S ribosomal RNA (16S mt-rRNA) and 32 different proteins. The 54S large subunit contains a 23S rRNA (23S mt-rRNA) and 42 different proteins. uL24m forms the wall of the exit tunnel.

It localises to the mitochondrion. Functionally, component of the mitochondrial ribosome (mitoribosome), a dedicated translation machinery responsible for the synthesis of mitochondrial genome-encoded proteins, including at least some of the essential transmembrane subunits of the mitochondrial respiratory chain. The mitoribosomes are attached to the mitochondrial inner membrane and translation products are cotranslationally integrated into the membrane. This is Large ribosomal subunit protein uL24m (mrpl40) from Neurospora crassa (strain ATCC 24698 / 74-OR23-1A / CBS 708.71 / DSM 1257 / FGSC 987).